The following is a 510-amino-acid chain: MIMSQLLNYVAVLFFCVSRASSLDTFIAAVYEHAVILPNATLVPVSPEEALAVMNRNLDLLEGAVTSASKQGAHIIVTPEDGIYGFNFTRESIYPYLEDIPDPQVNWIPCNNPDRFGHTPVQQRLSCLAKDNSIYIVANIGDKKSCNASDPQCPPDGRYQYNTDVVFDSKGKLVARYHKQNLFLNEDQFNAPKEPEVVTFNTTFGKFGIFTCFDILFHDPAVTLVRDSHVDTILFPTAWMNVLPHLSAIEFHSAWAMGMRVNFLASNLHYPLKKMTGSGIYAPDSPRAFHYDMKTEEGKLLLAQLDSHPHPTPVVNWTSYASGVEAHSVGNQEFTGIIFFDEFTFLELKEIGGNYTVCQRDLCCHLSYKMSEKRSDEVYALGAFDGLHTVEGSYYLQICTLLKCKTTDLHTCGDSVETASTRFEMFSLSGTFGTQYVFPEVLLSEIQLAPGEFQVSNDGRLFSLKPTSGPVLTVTLFGRLYEKDSAPNTLSDLTTQALRLNPKTDAWKSK.

The N-terminal stretch at 1–22 (MIMSQLLNYVAVLFFCVSRASS) is a signal peptide. One can recognise a CN hydrolase domain in the interval 31-307 (YEHAVILPNA…GKLLLAQLDS (277 aa)). The N-linked (GlcNAc...) asparagine glycan is linked to N39. E80 (proton acceptor) is an active-site residue. 2 N-linked (GlcNAc...) asparagine glycosylation sites follow: N87 and N147. K179 (proton donor) is an active-site residue. The N-linked (GlcNAc...) asparagine glycan is linked to N201. C212 (nucleophile) is an active-site residue. N316 and N354 each carry an N-linked (GlcNAc...) asparagine glycan. D492 carries the GPI-anchor amidated aspartate lipid modification. Residues 493–510 (LTTQALRLNPKTDAWKSK) constitute a propeptide, removed in mature form. T504 carries an O-linked (GalNAc...) threonine glycan.

Belongs to the carbon-nitrogen hydrolase superfamily. BTD/VNN family. In terms of assembly, monomer.

The protein localises to the cell membrane. It catalyses the reaction (R)-pantetheine + H2O = cysteamine + (R)-pantothenate. Its function is as follows. Amidohydrolase that hydrolyzes specifically one of the carboamide linkages in D-pantetheine thus recycling pantothenic acid (vitamin B5) and releasing cysteamine. The sequence is that of Pantetheinase (VNN1) from Bos taurus (Bovine).